A 231-amino-acid polypeptide reads, in one-letter code: Probable septum site-determining protein MinC (231 aa).

Positions 100–125 (EGKEKSPRPAPAPQAPAQNTTPVTKT) are disordered.

It belongs to the MinC family. In terms of assembly, interacts with MinD and FtsZ.

Its function is as follows. Cell division inhibitor that blocks the formation of polar Z ring septums. Rapidly oscillates between the poles of the cell to destabilize FtsZ filaments that have formed before they mature into polar Z rings. Prevents FtsZ polymerization. The sequence is that of Probable septum site-determining protein MinC from Escherichia coli O81 (strain ED1a).